We begin with the raw amino-acid sequence, 386 residues long: Patatin-15 (386 aa).

A signal peptide spans 1-23 (MATTKSFLILFFMILATTSSTCA). The PNPLA domain maps to 32 to 229 (LSIDGGGIKG…TVGDPALLSL (198 aa)). Residues 36–41 (GGGIKG) carry the GXGXXG motif. Residues 75–79 (GTSTG) carry the GXSXG motif. Serine 77 functions as the Nucleophile in the catalytic mechanism. Asparagine 115 carries an N-linked (GlcNAc...) asparagine glycan. The Proton acceptor role is filled by aspartate 215. A DGA/G motif is present at residues 215–217 (DGG). Positions 321–384 (ENALTGTTTE…DRKKLRANKA (64 aa)) form a coiled coil.

Belongs to the patatin family. As to expression, tuber.

The protein resides in the vacuole. In terms of biological role, probable lipolytic acyl hydrolase (LAH), an activity which is thought to be involved in the response of tubers to pathogens. The sequence is that of Patatin-15 from Solanum tuberosum (Potato).